We begin with the raw amino-acid sequence, 89 residues long: Small ribosomal subunit protein uS15 (89 aa).

It belongs to the universal ribosomal protein uS15 family. Part of the 30S ribosomal subunit. Forms a bridge to the 50S subunit in the 70S ribosome, contacting the 23S rRNA.

Its function is as follows. One of the primary rRNA binding proteins, it binds directly to 16S rRNA where it helps nucleate assembly of the platform of the 30S subunit by binding and bridging several RNA helices of the 16S rRNA. In terms of biological role, forms an intersubunit bridge (bridge B4) with the 23S rRNA of the 50S subunit in the ribosome. The protein is Small ribosomal subunit protein uS15 of Cupriavidus necator (strain ATCC 17699 / DSM 428 / KCTC 22496 / NCIMB 10442 / H16 / Stanier 337) (Ralstonia eutropha).